The sequence spans 264 residues: Zinc transporter ZupT (264 aa).

5 consecutive transmembrane segments (helical) span residues 8–28 (AFIL…IAFV), 36–56 (FLSV…MIEI), 75–95 (WLTV…DKLI), 121–141 (GLMT…ATFI), and 148–168 (SIAI…GIAV). Fe(2+) is bound by residues Asn-132 and Glu-135. Residues Glu-135 and His-160 each coordinate Zn(2+). The Fe(2+) site is built by Asn-161, Glu-164, and Glu-193. Glu-164 contributes to the Zn(2+) binding site. 3 helical membrane-spanning segments follow: residues 197-217 (AIIG…GAIF), 219-239 (AVAG…AEEY), and 244-264 (LAIY…LLFI).

It belongs to the ZIP transporter (TC 2.A.5) family. ZupT subfamily.

Its subcellular location is the cell membrane. The enzyme catalyses Zn(2+)(in) = Zn(2+)(out). Functionally, mediates zinc uptake. May also transport other divalent cations. The protein is Zinc transporter ZupT of Streptococcus mutans serotype c (strain ATCC 700610 / UA159).